A 301-amino-acid polypeptide reads, in one-letter code: uncharacterized protein (301 aa).

Belongs to the asfivirus E301R family. As to quaternary structure, interacts with host IRF3.

Plays a role in the inhibition of host innate immune system by acting as a negatively regulator of type I interferon production. Mechanistically, interacts with and prevents host IRF3 nuclear localization to inhibit its transcriptional activity. This is an uncharacterized protein from African swine fever virus (isolate Pig/Kenya/KEN-50/1950) (ASFV).